A 388-amino-acid polypeptide reads, in one-letter code: GTPase Obg (388 aa).

The region spanning 1-159 is the Obg domain; sequence MKFIDEASIR…RSLRLELLLL (159 aa). Residues 160–333 enclose the OBG-type G domain; the sequence is ADVGLLGMPN…LSLKLLDYIA (174 aa). Residues 166-173, 191-195, 213-216, 283-286, and 314-316 each bind GTP; these read GMPNAGKS, FTTLV, DIPG, NKTD, and SAF. The Mg(2+) site is built by S173 and T193.

Belongs to the TRAFAC class OBG-HflX-like GTPase superfamily. OBG GTPase family. In terms of assembly, monomer. Mg(2+) serves as cofactor.

Its subcellular location is the cytoplasm. Functionally, an essential GTPase which binds GTP, GDP and possibly (p)ppGpp with moderate affinity, with high nucleotide exchange rates and a fairly low GTP hydrolysis rate. Plays a role in control of the cell cycle, stress response, ribosome biogenesis and in those bacteria that undergo differentiation, in morphogenesis control. The sequence is that of GTPase Obg from Shewanella denitrificans (strain OS217 / ATCC BAA-1090 / DSM 15013).